Consider the following 390-residue polypeptide: Transaldolase (390 aa).

The Schiff-base intermediate with substrate role is filled by K135. EF-hand domains are found at residues 329 to 364 and 365 to 388; these read AFCH…FDAL and DHDH…LALT. Ca(2+) contacts are provided by D342, D344, D346, C348, E353, D365, D367, D369, R371, and D376.

This sequence belongs to the transaldolase family. Type 1 subfamily.

The protein resides in the cytoplasm. The enzyme catalyses D-sedoheptulose 7-phosphate + D-glyceraldehyde 3-phosphate = D-erythrose 4-phosphate + beta-D-fructose 6-phosphate. It participates in carbohydrate degradation; pentose phosphate pathway; D-glyceraldehyde 3-phosphate and beta-D-fructose 6-phosphate from D-ribose 5-phosphate and D-xylulose 5-phosphate (non-oxidative stage): step 2/3. In terms of biological role, transaldolase is important for the balance of metabolites in the pentose-phosphate pathway. The polypeptide is Transaldolase (Prochlorococcus marinus (strain MIT 9313)).